Reading from the N-terminus, the 425-residue chain is tRNA(Ile)-lysidine synthase (425 aa).

27–32 (SGGLDS) provides a ligand contact to ATP.

It belongs to the tRNA(Ile)-lysidine synthase family.

It localises to the cytoplasm. The catalysed reaction is cytidine(34) in tRNA(Ile2) + L-lysine + ATP = lysidine(34) in tRNA(Ile2) + AMP + diphosphate + H(+). Ligates lysine onto the cytidine present at position 34 of the AUA codon-specific tRNA(Ile) that contains the anticodon CAU, in an ATP-dependent manner. Cytidine is converted to lysidine, thus changing the amino acid specificity of the tRNA from methionine to isoleucine. The polypeptide is tRNA(Ile)-lysidine synthase (Streptococcus pneumoniae (strain JJA)).